A 249-amino-acid chain; its full sequence is Enolase-phosphatase E1 (249 aa).

This sequence belongs to the HAD-like hydrolase superfamily. MasA/MtnC family. Monomer. Requires Mg(2+) as cofactor.

The enzyme catalyses 5-methylsulfanyl-2,3-dioxopentyl phosphate + H2O = 1,2-dihydroxy-5-(methylsulfanyl)pent-1-en-3-one + phosphate. Its pathway is amino-acid biosynthesis; L-methionine biosynthesis via salvage pathway; L-methionine from S-methyl-5-thio-alpha-D-ribose 1-phosphate: step 3/6. It functions in the pathway amino-acid biosynthesis; L-methionine biosynthesis via salvage pathway; L-methionine from S-methyl-5-thio-alpha-D-ribose 1-phosphate: step 4/6. Bifunctional enzyme that catalyzes the enolization of 2,3-diketo-5-methylthiopentyl-1-phosphate (DK-MTP-1-P) into the intermediate 2-hydroxy-3-keto-5-methylthiopentenyl-1-phosphate (HK-MTPenyl-1-P), which is then dephosphorylated to form the acireductone 1,2-dihydroxy-3-keto-5-methylthiopentene (DHK-MTPene). This is Enolase-phosphatase E1 from Synechococcus sp. (strain RCC307).